A 127-amino-acid chain; its full sequence is Fluoride-specific ion channel FluC (127 aa).

3 helical membrane-spanning segments follow: residues 37–57, 68–88, and 102–122; these read TSFV…WLAL, LFLA…SLEV, and LYAG…LWMA. Positions 76 and 79 each coordinate Na(+).

Belongs to the fluoride channel Fluc/FEX (TC 1.A.43) family.

The protein localises to the cell inner membrane. It catalyses the reaction fluoride(in) = fluoride(out). With respect to regulation, na(+) is not transported, but it plays an essential structural role and its presence is essential for fluoride channel function. Functionally, fluoride-specific ion channel. Important for reducing fluoride concentration in the cell, thus reducing its toxicity. The chain is Fluoride-specific ion channel FluC from Hyphomonas neptunium (strain ATCC 15444).